The following is a 733-amino-acid chain: Photosystem I P700 chlorophyll a apoprotein A2 (733 aa).

8 helical membrane-spanning segments follow: residues 46 to 69 (IFASHFGHLAIIFLWTSGNLFHVA), 134 to 157 (LYKGSIGLLLLASVLLIAGWLHLQ), 174 to 198 (LNHHLSGLLGFSSLAWTGHLVHVAI), 272 to 290 (MAHHHLAIAVVFIVAGHMY), 329 to 352 (LHMQLGLALACLGVATSLTAQHMY), 368 to 394 (AALYTHHQYIAGFLMVGAFAHGAIFFV), 416 to 438 (AIISHLSWASLFLGFHTLGLYIH), and 516 to 534 (FLVHHAIALGLHVTALILV). 2 residues coordinate [4Fe-4S] cluster: Cys-558 and Cys-567. 2 helical membrane-spanning segments follow: residues 574–595 (AFYLAMFWMLNTIGWVTFYWHW) and 642–664 (LSVWSWMFLFGHLIWATGFMFLI). Chlorophyll a-binding residues include His-653, Met-661, and Tyr-669. A phylloquinone-binding site is contributed by Trp-670. A helical membrane pass occupies residues 706-726 (LVGLVHFSVGYILTYAAFVIA).

Belongs to the PsaA/PsaB family. As to quaternary structure, the PsaA/B heterodimer binds the P700 chlorophyll special pair and subsequent electron acceptors. PSI consists of a core antenna complex that captures photons, and an electron transfer chain that converts photonic excitation into a charge separation. The eukaryotic PSI reaction center is composed of at least 11 subunits. P700 is a chlorophyll a/chlorophyll a' dimer, A0 is one or more chlorophyll a, A1 is one or both phylloquinones and FX is a shared 4Fe-4S iron-sulfur center. serves as cofactor.

It is found in the plastid. The protein resides in the chloroplast thylakoid membrane. The enzyme catalyses reduced [plastocyanin] + hnu + oxidized [2Fe-2S]-[ferredoxin] = oxidized [plastocyanin] + reduced [2Fe-2S]-[ferredoxin]. Its function is as follows. PsaA and PsaB bind P700, the primary electron donor of photosystem I (PSI), as well as the electron acceptors A0, A1 and FX. PSI is a plastocyanin/cytochrome c6-ferredoxin oxidoreductase, converting photonic excitation into a charge separation, which transfers an electron from the donor P700 chlorophyll pair to the spectroscopically characterized acceptors A0, A1, FX, FA and FB in turn. Oxidized P700 is reduced on the lumenal side of the thylakoid membrane by plastocyanin or cytochrome c6. The protein is Photosystem I P700 chlorophyll a apoprotein A2 of Thalassiosira pseudonana (Marine diatom).